A 77-amino-acid chain; its full sequence is Metallothionein-like protein 2B (77 aa).

The protein belongs to the metallothionein superfamily. Type 15 family. In terms of tissue distribution, expressed in vascular tissues of all organs. Expressed in root and leaf phloem, pollen and root hairs.

In terms of biological role, metallothioneins have a high content of cysteine residues that bind various heavy metals. Functions as a metal chelator of copper (Cu) and zinc (Zn). Functions cooperatively with the phytochelatin synthase PCS1 to protect plants from Cu and cadmium toxicity. Plays a role in Cu homeostasis, specifically in the remobilization of Cu from senescing leaves. The mobilization of Cu from internal sources is important for seed development. This Arabidopsis thaliana (Mouse-ear cress) protein is Metallothionein-like protein 2B (MT2B).